Reading from the N-terminus, the 324-residue chain is Cysteine-rich repeat secretory protein 9 (324 aa).

The N-terminal stretch at 1–27 (MARIIITLTIPLFYFFFFSLLSHQTMS) is a signal peptide. 2 consecutive Gnk2-homologous domains span residues 29–132 (PDHI…NVSF) and 138–248 (IVPS…TSVL). A disordered region spans residues 251–286 (PPPSPSAPPPRSPPPKSSPPSSLPQTPSPPLVFTPP).

This sequence belongs to the cysteine-rich repeat secretory protein family.

It localises to the secreted. This chain is Cysteine-rich repeat secretory protein 9 (CRRSP9), found in Arabidopsis thaliana (Mouse-ear cress).